Here is a 350-residue protein sequence, read N- to C-terminus: Ornithine cyclodeaminase (350 aa).

The L-ornithine site is built by arginine 45 and lysine 69. NAD(+)-binding positions include threonine 84, arginine 112, 139-140 (AQ), aspartate 161, threonine 202, 225-228 (VGGD), lysine 232, and serine 293. Residue arginine 112 participates in L-ornithine binding. Residue aspartate 228 participates in L-ornithine binding. Aspartate 228 functions as the Proton donor/acceptor in the catalytic mechanism. Valine 294 lines the L-ornithine pocket. NAD(+) is bound at residue lysine 331.

Belongs to the ornithine cyclodeaminase/mu-crystallin family. Homodimer. Requires NAD(+) as cofactor.

It catalyses the reaction L-ornithine = L-proline + NH4(+). It functions in the pathway amino-acid biosynthesis; L-proline biosynthesis; L-proline from L-ornithine: step 1/1. Catalyzes the conversion of L-ornithine into L-proline with release of ammonia. Is likely involved in the L-ornithine degradation pathway that allows P.putida to utilize this compound as sole carbon and nitrogen source. In Pseudomonas putida (strain ATCC 47054 / DSM 6125 / CFBP 8728 / NCIMB 11950 / KT2440), this protein is Ornithine cyclodeaminase.